A 56-amino-acid polypeptide reads, in one-letter code: Potassium channel toxin alpha-KTx 9.8 (56 aa).

The first 19 residues, 1-19 (MSRLFTLVLIVLAMNVMMA), serve as a signal peptide directing secretion. Positions 20 to 28 (IISDPVVEA) are excised as a propeptide. Cystine bridges form between cysteine 31–cysteine 47, cysteine 34–cysteine 52, and cysteine 38–cysteine 54.

The protein belongs to the short scorpion toxin superfamily. Potassium channel inhibitor family. Alpha-KTx 09 subfamily. As to expression, expressed by the venom gland.

Its subcellular location is the secreted. Potassium channel inhibitor. This chain is Potassium channel toxin alpha-KTx 9.8, found in Buthus israelis (Israeli scorpion).